A 166-amino-acid polypeptide reads, in one-letter code: Large ribosomal subunit protein uL10 (166 aa).

It belongs to the universal ribosomal protein uL10 family. In terms of assembly, part of the ribosomal stalk of the 50S ribosomal subunit. The N-terminus interacts with L11 and the large rRNA to form the base of the stalk. The C-terminus forms an elongated spine to which L12 dimers bind in a sequential fashion forming a multimeric L10(L12)X complex.

In terms of biological role, forms part of the ribosomal stalk, playing a central role in the interaction of the ribosome with GTP-bound translation factors. The chain is Large ribosomal subunit protein uL10 from Shewanella denitrificans (strain OS217 / ATCC BAA-1090 / DSM 15013).